Consider the following 119-residue polypeptide: Ribonuclease P protein component (119 aa).

Belongs to the RnpA family. As to quaternary structure, consists of a catalytic RNA component (M1 or rnpB) and a protein subunit.

It carries out the reaction Endonucleolytic cleavage of RNA, removing 5'-extranucleotides from tRNA precursor.. In terms of biological role, RNaseP catalyzes the removal of the 5'-leader sequence from pre-tRNA to produce the mature 5'-terminus. It can also cleave other RNA substrates such as 4.5S RNA. The protein component plays an auxiliary but essential role in vivo by binding to the 5'-leader sequence and broadening the substrate specificity of the ribozyme. The polypeptide is Ribonuclease P protein component (Pectobacterium atrosepticum (strain SCRI 1043 / ATCC BAA-672) (Erwinia carotovora subsp. atroseptica)).